The following is a 505-amino-acid chain: Maturase K (505 aa).

This sequence belongs to the intron maturase 2 family. MatK subfamily.

The protein localises to the plastid. Its subcellular location is the chloroplast. Usually encoded in the trnK tRNA gene intron. Probably assists in splicing its own and other chloroplast group II introns. This is Maturase K from Blitum bonus-henricus (Good King Henry).